A 436-amino-acid chain; its full sequence is GTPase Der (436 aa).

EngA-type G domains follow at residues 4-167 (PTVA…PTEV) and 175-351 (IRFS…ESQN). Residues 10–17 (GRPNVGKS), 57–61 (DTGGI), 119–122 (NKVD), 181–188 (GRPNVGKS), 229–233 (DTAGM), and 294–297 (NKWD) contribute to the GTP site. The 85-residue stretch at 352–436 (RRISSAVLND…PIHLIARKRK (85 aa)) folds into the KH-like domain.

The protein belongs to the TRAFAC class TrmE-Era-EngA-EngB-Septin-like GTPase superfamily. EngA (Der) GTPase family. In terms of assembly, associates with the 50S ribosomal subunit.

In terms of biological role, GTPase that plays an essential role in the late steps of ribosome biogenesis. The polypeptide is GTPase Der (Streptococcus thermophilus (strain ATCC BAA-491 / LMD-9)).